The chain runs to 350 residues: Nicotinate-nucleotide--dimethylbenzimidazole phosphoribosyltransferase (350 aa).

The active-site Proton acceptor is the glutamate 316.

Belongs to the CobT family.

It carries out the reaction 5,6-dimethylbenzimidazole + nicotinate beta-D-ribonucleotide = alpha-ribazole 5'-phosphate + nicotinate + H(+). Its pathway is nucleoside biosynthesis; alpha-ribazole biosynthesis; alpha-ribazole from 5,6-dimethylbenzimidazole: step 1/2. Catalyzes the synthesis of alpha-ribazole-5'-phosphate from nicotinate mononucleotide (NAMN) and 5,6-dimethylbenzimidazole (DMB). This chain is Nicotinate-nucleotide--dimethylbenzimidazole phosphoribosyltransferase, found in Bradyrhizobium diazoefficiens (strain JCM 10833 / BCRC 13528 / IAM 13628 / NBRC 14792 / USDA 110).